Consider the following 324-residue polypeptide: Serpentine receptor class gamma-10 (324 aa).

The next 8 membrane-spanning stretches (helical) occupy residues 39–59 (SSYLIVGAVLNVMIVYTVFHG), 69–89 (MLYCADAIVGIYINTAEVIFG), 91–111 (IFIYITPLCPIASPYFFTPSI), 128–146 (TFSQIFMSFNRMTCVIFLM), 155–175 (ILKPVLIITFILPLGVIWKIL), 206–226 (LFHFTLCFVLVIIFFVATILG), 246–266 (MIMAVQTVTFASIQIYFVFFA), and 279–299 (IVSFVFDSLYVFSPIALIVMS).

Belongs to the nematode receptor-like protein srg family.

It is found in the membrane. The chain is Serpentine receptor class gamma-10 (srg-10) from Caenorhabditis elegans.